Consider the following 990-residue polypeptide: Activator of stress genes protein 1 (990 aa).

Residues 1–88 are disordered; sequence MPKREIEDTQ…NKPKSQENKR (88 aa). Polar residues predominate over residues 9–23; the sequence is TQSPYSSTGLVSTGE. The span at 24 to 61 shows a compositional bias: low complexity; sequence SPKTSTSTPTSSTNNRAATTTTNNTSTTSTSLLKSNSN. Residues 95–121 constitute a DNA-binding region (zn(2)-C6 fungal-type); sequence CDTCRQKKVKCDGKQPCIHCTVYSYKC. Composition is skewed to low complexity over residues 160–179, 282–293, and 773–793; these read NNNS…QQHV, SFDDSSNSAVSS, and TATT…NSNS. Disordered stretches follow at residues 160–192, 255–295, 764–800, and 915–944; these read NNNS…PADE, QDPD…SSPR, RTAS…TLPA, and SNNN…NGVA.

The protein belongs to the ASG1 family.

The protein localises to the nucleus. Functionally, transcription factor necessary to sustain growth on non-fermentative carbon sources such as sodium acetate, acetic acid, or ethanol. Plays a role in hyphal formation. This Candida albicans (strain SC5314 / ATCC MYA-2876) (Yeast) protein is Activator of stress genes protein 1 (ASG1).